The sequence spans 511 residues: Lysine--tRNA ligase (511 aa).

Residues E403 and E410 each coordinate Mg(2+).

This sequence belongs to the class-II aminoacyl-tRNA synthetase family. Homodimer. It depends on Mg(2+) as a cofactor.

The protein localises to the cytoplasm. The enzyme catalyses tRNA(Lys) + L-lysine + ATP = L-lysyl-tRNA(Lys) + AMP + diphosphate. This Onion yellows phytoplasma (strain OY-M) protein is Lysine--tRNA ligase.